The chain runs to 504 residues: MTNFFDILSERKGQLFSTMIEHIQISFIALLIATAIAVPLGILLTKTKTISEIVMNIAAILQTIPSLALLGLMIPLFGIGRVPAIIALVVYALLPILRNTYTGIKEVDPSLIEAAKGIGMKPFRRLTKVELPIAMPVIMAGVRTAMVLIIGTATLAALIGAGGLGDLILLGIDRNNASLILLGAIPAALLAIIFDLILRFMAKLSYKKLLMTLGVIVMIIILAIAIPMFAQKGDKITLAGKLGSEPSIITNMYKILIEEETKNTVEVKDGMGKTAFLFNALKSDDIDGYLEFTGTVLGELTKEPLKSKEEKKVYEQAKQSLEKKYQMTMLKPMKYNNTYALAVKRDFAKQHNIRTIGDLNKVKDQLKPGFTLEFNDRPDGYKAVQKAYNLNLDNIRTMEPKLRYQAINKGNINLIDAYSTDAELKQYDMVVLKDDKHVFPPYQGAPLFKESFLKKHPEIKKPLNKLENKISDEDMQMMNYKVTVKNEDPYTVAKDYLKAKGLIK.

An ABC transmembrane type-1 domain is found at methionine 19 to leucine 198. 6 helical membrane-spanning segments follow: residues isoleucine 25–threonine 45, threonine 49–leucine 69, leucine 70–valine 90, alanine 145–glycine 165, serine 178–leucine 198, and leucine 209–phenylalanine 229. Positions glutamine 231–lysine 504 are ergothioneine binding domain.

This sequence in the N-terminal section; belongs to the binding-protein-dependent transport system permease family. It in the C-terminal section; belongs to the OsmX family. The complex is probably composed of at least an ATP-binding protein (EgtUA) and a transmembrane protein (EgtUBC).

Its subcellular location is the membrane. Functionally, part of an ABC transporter complex EgtU required for the uptake of ergothioneine (EGT), a natural low-molecular weight (LMW) thiol antioxidant. Responsible for the translocation of the substrate across the membrane. Also contains a C-terminal periplasmic solute-binding domain (SBD) which binds to EGT with sub-micromolar affinity. Probably does not bind L-hercynine. The polypeptide is Probable ergothioneine transporter EgtUBC (egtUBC) (Staphylococcus aureus (strain USA300)).